The following is an 841-amino-acid chain: Copper-transporting P-type ATPase (841 aa).

The next 6 membrane-spanning stretches (helical) occupy residues 186–206 (LWVS…PMLG), 218–238 (ATFI…LPFF), 256–276 (IGLG…APGI), 285–305 (GAAV…VFVG), 445–465 (AVFV…WAAI), and 474–494 (GLLA…GLAT). Asp530 functions as the 4-aspartylphosphate intermediate in the catalytic mechanism. 2 consecutive transmembrane segments (helical) span residues 602–622 (GIAD…DLGI) and 638–658 (GKTV…AVAD). The Mg(2+) site is built by Asp729 and Asp733. Transmembrane regions (helical) follow at residues 742-762 (VGIA…ITLV) and 800-820 (VAAG…IAAA).

It belongs to the cation transport ATPase (P-type) (TC 3.A.3) family. Type IB subfamily.

It localises to the cell membrane. It carries out the reaction Cu(2+)(in) + ATP + H2O = Cu(2+)(out) + ADP + phosphate + H(+). In terms of biological role, involved in copper efflux. The sequence is that of Copper-transporting P-type ATPase (actP) from Rhizobium leguminosarum bv. viciae.